The sequence spans 187 residues: Ion-translocating oxidoreductase complex subunit B (187 aa).

The segment at 1–26 is hydrophobic; it reads MTHILFAVLVLALLALAFGIILGFAA. Positions 32–90 constitute a 4Fe-4S domain; that stretch reads EADPIVDQLDALLPQTQCGQCGYPGCKPYAEALANGDQINKCVPGGDATMRKIADLMGV. The [4Fe-4S] cluster site is built by cysteine 49, cysteine 52, cysteine 57, cysteine 73, cysteine 115, cysteine 118, cysteine 121, cysteine 125, cysteine 145, cysteine 148, cysteine 151, and cysteine 155. 2 4Fe-4S ferredoxin-type domains span residues 106 to 135 and 136 to 165; these read KVAF…GATK and AMHT…MIPV.

It belongs to the 4Fe4S bacterial-type ferredoxin family. RnfB subfamily. In terms of assembly, the complex is composed of six subunits: RnfA, RnfB, RnfC, RnfD, RnfE and RnfG. The cofactor is [4Fe-4S] cluster.

Its subcellular location is the cell inner membrane. Part of a membrane-bound complex that couples electron transfer with translocation of ions across the membrane. The polypeptide is Ion-translocating oxidoreductase complex subunit B (Aeromonas salmonicida (strain A449)).